The chain runs to 230 residues: Transmembrane ascorbate ferrireductase 2 (230 aa).

2 helical membrane-spanning segments follow: residues 5–25 (VLGG…IAAL) and 50–70 (VHPV…MLAY). The region spanning 14-218 (VVRVLGFIIA…LGGFVILGVV (205 aa)) is the Cytochrome b561 domain. His51 provides a ligand contact to heme b. Lys77 and Lys81 together coordinate L-ascorbate. A helical transmembrane segment spans residues 82-102 (LVHLTLQLTAFILSLIGVWAA). Heme b is bound at residue His84. Residues Phe105, His106, and Tyr115 each coordinate monodehydro-L-ascorbate radical. His118 contacts heme b. The helical transmembrane segment at 120–140 (WLGLACLFLFAFQWAAGFVTY) threads the bilayer. L-ascorbate-binding residues include Tyr140, Arg150, and Ala151. His157 provides a ligand contact to heme b. Residues 157–177 (HVFLGISIYALALVTATTGIL) form a helical membrane-spanning segment. Phe182 and Asn186 together coordinate monodehydro-L-ascorbate radical. The helical transmembrane segment at 198 to 218 (LVNTMGVLILILGGFVILGVV) threads the bilayer.

Homodimer. It depends on heme b as a cofactor. Expressed in roots, seedlings, leaves and flowers. Expressed in the L1 layer of the shoot apex, in the epidermis of leaf primordia and young leaves and in vascular bundles. In the differentiation zone of the root, detected in the pericycle and in the epidermis, but not in the cortex. Strongly expressed in the cortical region of the root tip, in the meristematic tissue and in the epidermal cell layer of lateral roots, but not in the root caps. Highly expressed in unfertilized ovules. In mature embryos, expressed in the epidermis, cotyledon tips and root tips.

Its subcellular location is the membrane. It carries out the reaction Fe(3+)(out) + L-ascorbate(in) = monodehydro-L-ascorbate radical(in) + Fe(2+)(out) + H(+). Two-heme-containing cytochrome. Catalyzes ascorbate-dependent transmembrane ferric-chelate reduction. This chain is Transmembrane ascorbate ferrireductase 2 (CYB561B), found in Arabidopsis thaliana (Mouse-ear cress).